The sequence spans 155 residues: Ribosomal RNA large subunit methyltransferase H (155 aa).

Residues Leu-72, Gly-103, and 122–127 (FGRMVW) contribute to the S-adenosyl-L-methionine site.

It belongs to the RNA methyltransferase RlmH family. Homodimer.

The protein resides in the cytoplasm. It carries out the reaction pseudouridine(1915) in 23S rRNA + S-adenosyl-L-methionine = N(3)-methylpseudouridine(1915) in 23S rRNA + S-adenosyl-L-homocysteine + H(+). Specifically methylates the pseudouridine at position 1915 (m3Psi1915) in 23S rRNA. In Cereibacter sphaeroides (strain ATCC 17023 / DSM 158 / JCM 6121 / CCUG 31486 / LMG 2827 / NBRC 12203 / NCIMB 8253 / ATH 2.4.1.) (Rhodobacter sphaeroides), this protein is Ribosomal RNA large subunit methyltransferase H.